The chain runs to 176 residues: Centromere protein R (176 aa).

Lys-8 participates in a covalent cross-link: Glycyl lysine isopeptide (Lys-Gly) (interchain with G-Cter in SUMO2). Ser-17 carries the post-translational modification Phosphoserine. The tract at residues 20–50 is DD1; it reads PSKIMRKKSITAFSPTTGTYQLSPFSSPRTP. Lys-22 is covalently cross-linked (Glycyl lysine isopeptide (Lys-Gly) (interchain with G-Cter in SUMO2)). Ser-28 carries the phosphoserine modification. Residues 34–48 are compositionally biased toward polar residues; that stretch reads PTTGTYQLSPFSSPR. Positions 34 to 80 are disordered; sequence PTTGTYQLSPFSSPRTPKEQEHRDGPSNGTRKWSVLSSPARQDSTVK. Basic and acidic residues predominate over residues 49–58; the sequence is TPKEQEHRDG. The span at 60–80 shows a compositional bias: polar residues; the sequence is SNGTRKWSVLSSPARQDSTVK. The Nuclear localization signal motif lies at 63–66; that stretch reads TRKW. Residue Ser-71 is modified to Phosphoserine. Residues 82-112 are a coiled coil; the sequence is SDGFMMLLSKIERSSEKTMEIMKNLSSLQAL. An LXXLL motif motif is present at residues 118 to 122; that stretch reads LEDLL. An LXXIL motif motif is present at residues 171–175; it reads LKAIL.

Homodimer; mediated by the coiled coil domain. Interacts with CCNA2 and MTA1. Interacts with NFKB1 NF-kappa-B subunit. Component of the CENPA-CAD complex, composed of CENPI, CENPK, CENPL, CENPO, CENPP, CENPQ, CENPR and CENPS. The CENPA-CAD complex interacts with the CENPA-NAC complex, at least composed of CENPA, CENPC, CENPH, CENPM, CENPN, CENPT and CENPU. Interacts with TASOR.

The protein resides in the nucleus. It is found in the chromosome. It localises to the centromere. Its subcellular location is the kinetochore. Its function is as follows. Transcription coregulator that can have both coactivator and corepressor functions. Involved in the coactivation of nuclear receptors for retinoid X (RXRs) and thyroid hormone (TRs) in a ligand-dependent fashion. In contrast, it does not coactivate nuclear receptors for retinoic acid, vitamin D, progesterone receptor, nor glucocorticoid. Acts as a coactivator for estrogen receptor alpha. Acts as a transcriptional corepressor via its interaction with the NFKB1 NF-kappa-B subunit, possibly by interfering with the transactivation domain of NFKB1. Induces apoptosis in breast cancer cells, but not in other cancer cells, via a caspase-2 mediated pathway that involves mitochondrial membrane permeabilization but does not require other caspases. May also act as an inhibitor of cyclin A-associated kinase. Also acts a component of the CENPA-CAD (nucleosome distal) complex, a complex recruited to centromeres which is involved in assembly of kinetochore proteins, mitotic progression and chromosome segregation. May be involved in incorporation of newly synthesized CENPA into centromeres via its interaction with the CENPA-NAC complex. This is Centromere protein R (Itgb3bp) from Rattus norvegicus (Rat).